The chain runs to 496 residues: Lysine--tRNA ligase (496 aa).

2 residues coordinate Mg(2+): glutamate 409 and glutamate 416.

The protein belongs to the class-II aminoacyl-tRNA synthetase family. As to quaternary structure, homodimer. Mg(2+) is required as a cofactor.

The protein resides in the cytoplasm. It carries out the reaction tRNA(Lys) + L-lysine + ATP = L-lysyl-tRNA(Lys) + AMP + diphosphate. In Streptococcus pneumoniae (strain CGSP14), this protein is Lysine--tRNA ligase.